The sequence spans 533 residues: Suppressor of cytokine signaling 6 (533 aa).

Disordered regions lie at residues 54 to 136 (CDIG…WPLR) and 177 to 199 (ELRDLQPEPRPESRCSPSSPGDL). The segment covering 59 to 69 (EDEKGKNRSKS) has biased composition (basic and acidic residues). Residues 76–88 (LKRRLSAKQKTKG) are compositionally biased toward basic residues. Positions 177–189 (ELRDLQPEPRPES) are enriched in basic and acidic residues. Residues 382 to 489 (WYWGPITRWE…TYPVRLTNPV (108 aa)) form the SH2 domain. The SOCS box domain occupies 484 to 533 (RLTNPVSRFMQVRSLQYLCRFVIRQYTRIDLIQKLPLPNKMKDYLQEKHY).

In terms of assembly, interacts with KIT (phosphorylated). Interacts with RBCK1. Interacts with phosphorylated IRS4. Interacts with PIM3.

It functions in the pathway protein modification; protein ubiquitination. In terms of biological role, SOCS family proteins form part of a classical negative feedback system that regulates cytokine signal transduction. May be a substrate recognition component of a SCF-like ECS (Elongin BC-CUL2/5-SOCS-box protein) E3 ubiquitin-protein ligase complex which mediates the ubiquitination and subsequent proteasomal degradation of target proteins. Regulates KIT degradation by ubiquitination of the tyrosine-phosphorylated receptor. The chain is Suppressor of cytokine signaling 6 (Socs6) from Mus musculus (Mouse).